Reading from the N-terminus, the 137-residue chain is Urease subunit beta (137 aa).

The disordered stretch occupies residues 118–137; it reads IIAEENKVSENANKESGYNR. Residues 126–137 show a composition bias toward polar residues; it reads SENANKESGYNR.

This sequence belongs to the urease beta subunit family. Heterotrimer of UreA (gamma), UreB (beta) and UreC (alpha) subunits. Three heterotrimers associate to form the active enzyme.

The protein resides in the cytoplasm. It carries out the reaction urea + 2 H2O + H(+) = hydrogencarbonate + 2 NH4(+). It functions in the pathway nitrogen metabolism; urea degradation; CO(2) and NH(3) from urea (urease route): step 1/1. This is Urease subunit beta from Staphylococcus xylosus.